The following is a 467-amino-acid chain: Probable endopeptidase p60 (467 aa).

The signal sequence occupies residues Met-1–Ala-27. Residues Ser-28–Val-71 form the LysM 1 domain. In terms of domain architecture, SH3b spans Lys-79–Ala-143. Disordered stretches follow at residues Lys-154–Thr-199 and Lys-247–Asn-348. Residues Lys-172 to Ala-185 are compositionally biased toward low complexity. Residues Thr-199–Ile-242 enclose the LysM 2 domain. Over residues Thr-288–Asn-348 the composition is skewed to low complexity. Residues Thr-330–Asn-343 are 7 X 2 AA tandem repeats of T-N. The region spanning Asn-349–Val-467 is the NlpC/P60 domain. Cys-379 functions as the Nucleophile in the catalytic mechanism. Residue His-429 is the Proton acceptor of the active site. Asn-441 is an active-site residue.

This sequence belongs to the peptidase C40 family.

This major extracellular protein may be involved in the invasion of non-professional phagocytic cells by Listeria. In Listeria innocua serovar 6a (strain ATCC BAA-680 / CLIP 11262), this protein is Probable endopeptidase p60 (iap).